The chain runs to 259 residues: Polycomb group RING finger protein 1 (259 aa).

Alanine 2 is subject to N-acetylalanine. At serine 3 the chain carries Phosphoserine. Lysine 24 participates in a covalent cross-link: Glycyl lysine isopeptide (Lys-Gly) (interchain with G-Cter in SUMO2). Residues 47 to 86 form an RING-type zinc finger; sequence CCLCAGYFVDATTITECLHTFCKSCIVKYLQTSKYCPMCN. The interval 86 to 247 is necessary for repressor activity; that stretch reads NIKIHETQPL…LSHWFGKPSP (162 aa). A Glycyl lysine isopeptide (Lys-Gly) (interchain with G-Cter in SUMO2) cross-link involves residue lysine 88. The required for the interaction with the KDM2B-SKP1 heterodimeric complex stretch occupies residues 150-255; that stretch reads LPFSSFDHSK…SPLLLQYSVK (106 aa). The tract at residues 167 to 255 is RING-finger and WD40-associated ubiquitin-like domain (RAWUL); sufficient for interaction with BCOR and BCORL1; sequence EQLSLCLERL…SPLLLQYSVK (89 aa).

In terms of assembly, interacts with BCORL1, forming heterodimers. The PCGF1-BCORL1 heterodimeric complex interacts with the KDM2B-SKP1 heterodimeric complex to form a homotetrameric polycomb repression complex 1 (PRC1.1). Component of the repressive BCOR complex containing a Polycomb group subcomplex at least composed of RYBP, RING1 and RNF2/RING2. Specifically interacts with BCOR, RING1 and RNF2/RING2. Component of a PRC1-like complex. Interacts with CBX6, CBX7 and CBX8. Interacts with DPPA4, NANOG, POU5F1 and RYBP.

It is found in the nucleus. In terms of biological role, component of the Polycomb group (PcG) multiprotein BCOR complex, a complex required to maintain the transcriptionally repressive state of some genes, such as BCL6 and the cyclin-dependent kinase inhibitor, CDKN1A. Transcriptional repressor that may be targeted to the DNA by BCL6; this transcription repressor activity may be related to PKC signaling pathway. Represses CDKN1A expression by binding to its promoter, and this repression is dependent on the retinoic acid response element (RARE element). Promotes cell cycle progression and enhances cell proliferation as well. May have a positive role in tumor cell growth by down-regulating CDKN1A. Component of a Polycomb group (PcG) multiprotein PRC1-like complex, a complex class required to maintain the transcriptionally repressive state of many genes, including Hox genes, throughout development. PcG PRC1 complex acts via chromatin remodeling and modification of histones; it mediates monoubiquitination of histone H2A 'Lys-119', rendering chromatin heritably changed in its expressibility. Within the PRC1-like complex, regulates RNF2 ubiquitin ligase activity. Regulates the expression of DPPA4 and NANOG in the NT2 embryonic carcinoma cells. The chain is Polycomb group RING finger protein 1 (PCGF1) from Bos taurus (Bovine).